Consider the following 717-residue polypeptide: ATP-dependent zinc metalloprotease FtsH (717 aa).

Residues 1–7 (MFKDKKM) lie on the Cytoplasmic side of the membrane. Residues 8–28 (LKYIVIYSIIAFGILLTFNMV) traverse the membrane as a helical segment. Residues 29–109 (KDEMLYEKVD…VEFNVTKPEN (81 aa)) lie on the Extracellular side of the membrane. A helical membrane pass occupies residues 110 to 130 (YQLLGLLMSWVFPLILIFFVG). At 131-717 (RMMFSKMNNK…SSTNNKVDGE (587 aa)) the chain is on the cytoplasmic side. Residue 206-213 (GPPGTGKT) coordinates ATP. Residue H427 participates in Zn(2+) binding. E428 is an active-site residue. Zn(2+) contacts are provided by H431 and D504. Residues 670–717 (KLARANNEANNDALDSSKENEEVKSNVNDGATEEKKDDSSTNNKVDGE) are disordered. 2 stretches are compositionally biased toward basic and acidic residues: residues 684–693 (DSSKENEEVK) and 701–717 (TEEK…VDGE).

It in the central section; belongs to the AAA ATPase family. The protein in the C-terminal section; belongs to the peptidase M41 family. In terms of assembly, homohexamer. Zn(2+) serves as cofactor.

Its subcellular location is the cell membrane. Acts as a processive, ATP-dependent zinc metallopeptidase for both cytoplasmic and membrane proteins. Plays a role in the quality control of integral membrane proteins. This is ATP-dependent zinc metalloprotease FtsH from Clostridium perfringens (strain ATCC 13124 / DSM 756 / JCM 1290 / NCIMB 6125 / NCTC 8237 / Type A).